The primary structure comprises 263 residues: Virulence plasmid protein pGP6-D-related protein (263 aa).

It belongs to the UPF0137 (pGP6-D) family.

The sequence is that of Virulence plasmid protein pGP6-D-related protein from Chlamydia trachomatis serovar D (strain ATCC VR-885 / DSM 19411 / UW-3/Cx).